A 337-amino-acid chain; its full sequence is Protein FAM76B (337 aa).

The tract at residues 143-241 (EQRKSLGSTH…INQSTDSGGT (99 aa)) is disordered. Positions 147–159 (SLGSTHSNSSSSS) are enriched in low complexity. Over residues 166–187 (HHSKHHHHHHHHHRHSSSHHKI) the composition is skewed to basic residues. Over residues 213–222 (TPKKKPKLEF) the composition is skewed to basic and acidic residues. Residues 226–241 (NGDSSSINQSTDSGGT) are compositionally biased toward polar residues. Residues 301 to 326 (KDFVEQLQGKNRELLKQVAALSKGKK) are a coiled coil.

Belongs to the FAM76 family.

In terms of biological role, plays a role in hematopoiesis and immune system development, and participates in the inflammatory response. The chain is Protein FAM76B (fam76b) from Xenopus laevis (African clawed frog).